The primary structure comprises 280 residues: Merozoite surface protein 2 (280 aa).

Residues 1–20 form the signal peptide; it reads MKVIKTLSIINFFIFVTFNI. N-linked (GlcNAc...) asparagine glycans are attached at residues asparagine 22 and asparagine 36. Residues 44-206 form a polymorphic region region; the sequence is ANEGSNTKSV…PQTAENENPA (163 aa). The segment at 47-242 is disordered; sequence GSNTKSVGAN…SQKECTDGNK (196 aa). The segment at 51 to 74 is 5 X 12 AA tandem repeats of P-P-I-T-T-T-E-S-N-S-R-S; it reads KSVGANAPKADTIASGSQSSTNSA. Positions 64 to 98 are enriched in low complexity; the sequence is ASGSQSSTNSASTSTTNNGESQTTTPTAADTPTAT. The span at 99-149 shows a compositional bias: polar residues; it reads ESNSRSPPITTTESNSRSPPITTTESNSRSPPITTTESNSRSPPITTTESN. A run of 4 repeats spans residues 105–116, 117–128, 129–140, and 141–152. Residues 150-163 are compositionally biased toward low complexity; that stretch reads SRSPPITTTESSSS. A 5; partial repeat occupies 153 to 160; the sequence is PPITTTES. Asparagine 168 carries N-linked (GlcNAc...) asparagine glycosylation. The segment covering 170-182 has biased composition (basic and acidic residues); it reads TDGKGEESEKQNE. N-linked (GlcNAc...) asparagine glycosylation is found at asparagine 184 and asparagine 229. The segment covering 233 to 242 has biased composition (basic and acidic residues); the sequence is SQKECTDGNK. The cysteines at positions 237 and 245 are disulfide-linked. Asparagine 253 and asparagine 254 each carry an N-linked (GlcNAc...) asparagine glycan. Residue asparagine 254 is the site of GPI-anchor amidated asparagine attachment. A propeptide spans 255–280 (removed in mature form); that stretch reads SSNIASINKFVVLISATLVLSFAIFI.

Its subcellular location is the cell membrane. In terms of biological role, may play a role in the merozoite attachment to the erythrocyte. The polypeptide is Merozoite surface protein 2 (Plasmodium falciparum (isolate K1 / Thailand)).